The following is a 326-amino-acid chain: Ficolin-1 (326 aa).

The first 29 residues, 1–29, serve as a signal peptide directing secretion; the sequence is MELSRVAVALGPTGQLLLFLSFQTLAAQA. Residues 55-93 enclose the Collagen-like domain; that stretch reads GLPGAAGPKGEAGANGPKGERGSPGVVGKAGPAGPKGDR. Low complexity-rich tracts occupy residues 61–71 and 78–89; these read GPKGEAGANGP and PGVVGKAGPAGP. Residues 61–110 are disordered; that stretch reads GPKGEAGANGPKGERGSPGVVGKAGPAGPKGDRGEKGARGEKGEPGQLQS. Over residues 90–104 the composition is skewed to basic and acidic residues; the sequence is KGDRGEKGARGEKGE. One can recognise a Fibrinogen C-terminal domain in the interval 109 to 326; that stretch reads QSCATGPRTC…QVSEMKVRLT (218 aa). Disulfide bonds link cysteine 111–cysteine 139 and cysteine 118–cysteine 146. The tract at residues 115–154 is a domain; contributes to trimerization; sequence PRTCKELLTRGHFLSGWHTIYLPDCQPLTVLCDMDTDGGG. The segment at 155–243 is b domain; contributes to trimerization; it reads WTVFQRRSDG…LVLGGFLEGN (89 aa). Ca(2+) is bound by residues aspartate 262 and aspartate 264. Residue asparagine 265 is glycosylated (N-linked (GlcNAc...) asparagine). Cysteines 270 and 283 form a disulfide. A carbohydrate is bound at residue 282–284; it reads ACH. A glycan (N-linked (GlcNAc...) asparagine) is linked at asparagine 313. Residues 317-326 are p domain; it reads QVSEMKVRLT.

Belongs to the ficolin lectin family. Homotrimer. Interacts with elastin/ELN. Interacts (via Fibrinogen C-terminal domain) with FFAR2. Interacts with CRP; may regulate monocyte activation by FCN1. In terms of tissue distribution, most abundantly expressed in placenta and lung.

The protein localises to the secreted. It localises to the cell membrane. Its function is as follows. Extracellular lectin functioning as a pattern-recognition receptor in innate immunity. Binds the sugar moieties of pathogen-associated molecular patterns (PAMPs) displayed on microbes and activates the lectin pathway of the complement system. May also activate monocytes through a G protein-coupled receptor, FFAR2, inducing the secretion of interleukin-8/IL-8. Binds preferentially to 9-O-acetylated 2-6-linked sialic acid derivatives and to various glycans containing sialic acid engaged in a 2-3 linkage. This Sus scrofa (Pig) protein is Ficolin-1 (FCN1).